The chain runs to 269 residues: Formamidopyrimidine-DNA glycosylase (269 aa).

P2 acts as the Schiff-base intermediate with DNA in catalysis. E3 functions as the Proton donor in the catalytic mechanism. K57 serves as the catalytic Proton donor; for beta-elimination activity. Residues H90, R109, and K150 each contribute to the DNA site. The FPG-type zinc-finger motif lies at 235–269 (QVYGRKGEPCRVCGTPIVATKHAQRATFYCRQCQK). Residue R259 is the Proton donor; for delta-elimination activity of the active site.

Belongs to the FPG family. As to quaternary structure, monomer. Requires Zn(2+) as cofactor.

The enzyme catalyses Hydrolysis of DNA containing ring-opened 7-methylguanine residues, releasing 2,6-diamino-4-hydroxy-5-(N-methyl)formamidopyrimidine.. The catalysed reaction is 2'-deoxyribonucleotide-(2'-deoxyribose 5'-phosphate)-2'-deoxyribonucleotide-DNA = a 3'-end 2'-deoxyribonucleotide-(2,3-dehydro-2,3-deoxyribose 5'-phosphate)-DNA + a 5'-end 5'-phospho-2'-deoxyribonucleoside-DNA + H(+). In terms of biological role, involved in base excision repair of DNA damaged by oxidation or by mutagenic agents. Acts as a DNA glycosylase that recognizes and removes damaged bases. Has a preference for oxidized purines, such as 7,8-dihydro-8-oxoguanine (8-oxoG). Has AP (apurinic/apyrimidinic) lyase activity and introduces nicks in the DNA strand. Cleaves the DNA backbone by beta-delta elimination to generate a single-strand break at the site of the removed base with both 3'- and 5'-phosphates. This chain is Formamidopyrimidine-DNA glycosylase, found in Escherichia coli O6:H1 (strain CFT073 / ATCC 700928 / UPEC).